The primary structure comprises 58 residues: Small ribosomal subunit protein bS21 (58 aa).

Residues 36–58 (EFYEKPSVKRKRKSEAARKRKKF) form a disordered region. The span at 43–58 (VKRKRKSEAARKRKKF) shows a compositional bias: basic residues.

This sequence belongs to the bacterial ribosomal protein bS21 family.

The sequence is that of Small ribosomal subunit protein bS21 from Streptococcus uberis (strain ATCC BAA-854 / 0140J).